Here is a 164-residue protein sequence, read N- to C-terminus: R-phycoerythrin alpha chain (164 aa).

(2R,3E)-phycoerythrobilin is bound by residues cysteine 82 and cysteine 139.

The protein belongs to the phycobiliprotein family. As to quaternary structure, heterodimer of an alpha and a beta chain. Post-translationally, contains two covalently linked bilin chromophores.

It localises to the plastid. It is found in the chloroplast thylakoid membrane. Its function is as follows. Light-harvesting photosynthetic bile pigment-protein from the phycobiliprotein complex. This chain is R-phycoerythrin alpha chain (cpeA), found in Pyropia tenera (Nori).